Here is a 91-residue protein sequence, read N- to C-terminus: Small ribosomal subunit protein bS18 (91 aa).

Positions 1–14 (MTNQNQSQTQTTQT) are enriched in low complexity. Residues 1–24 (MTNQNQSQTQTTQTVEKVSSRQKK) are disordered.

This sequence belongs to the bacterial ribosomal protein bS18 family. As to quaternary structure, part of the 30S ribosomal subunit. Forms a tight heterodimer with protein bS6.

Functionally, binds as a heterodimer with protein bS6 to the central domain of the 16S rRNA, where it helps stabilize the platform of the 30S subunit. The chain is Small ribosomal subunit protein bS18 from Caldicellulosiruptor saccharolyticus (strain ATCC 43494 / DSM 8903 / Tp8T 6331).